The primary structure comprises 431 residues: Lipoyl synthase 2, mitochondrial (431 aa).

The interval 21–43 (SPLGKLQEERGEGVAKDPKKDKQ) is disordered. Positions 26 to 40 (LQEERGEGVAKDPKK) are enriched in basic and acidic residues. Residues C127, C132, C138, C159, C163, C166, and S375 each coordinate [4Fe-4S] cluster. In terms of domain architecture, Radical SAM core spans 142-364 (DEEEGTATAT…EEEAMAMGFL (223 aa)).

Belongs to the radical SAM superfamily. Lipoyl synthase family. Requires [4Fe-4S] cluster as cofactor.

It is found in the mitochondrion. It catalyses the reaction [[Fe-S] cluster scaffold protein carrying a second [4Fe-4S](2+) cluster] + N(6)-octanoyl-L-lysyl-[protein] + 2 oxidized [2Fe-2S]-[ferredoxin] + 2 S-adenosyl-L-methionine + 4 H(+) = [[Fe-S] cluster scaffold protein] + N(6)-[(R)-dihydrolipoyl]-L-lysyl-[protein] + 4 Fe(3+) + 2 hydrogen sulfide + 2 5'-deoxyadenosine + 2 L-methionine + 2 reduced [2Fe-2S]-[ferredoxin]. Its pathway is protein modification; protein lipoylation via endogenous pathway; protein N(6)-(lipoyl)lysine from octanoyl-[acyl-carrier-protein]: step 2/2. Catalyzes the radical-mediated insertion of two sulfur atoms into the C-6 and C-8 positions of the octanoyl moiety bound to the lipoyl domains of lipoate-dependent enzymes, thereby converting the octanoylated domains into lipoylated derivatives. The protein is Lipoyl synthase 2, mitochondrial of Trypanosoma cruzi (strain CL Brener).